The sequence spans 78 residues: UPF0335 protein RBE_1185 (78 aa).

The protein belongs to the UPF0335 family.

The sequence is that of UPF0335 protein RBE_1185 from Rickettsia bellii (strain RML369-C).